Consider the following 339-residue polypeptide: Dihydroorotate dehydrogenase (quinone) (339 aa).

FMN contacts are provided by residues 64–68 and threonine 88; that span reads AGADK. Residue lysine 68 coordinates substrate. A substrate-binding site is contributed by 113–117; the sequence is NRNGF. FMN-binding residues include asparagine 141 and asparagine 174. Asparagine 174 is a substrate binding site. Catalysis depends on serine 177, which acts as the Nucleophile. Asparagine 179 is a substrate binding site. The FMN site is built by lysine 219 and threonine 247. 248-249 provides a ligand contact to substrate; it reads NT. Residues glycine 270, glycine 299, and 320–321 contribute to the FMN site; that span reads YS.

The protein belongs to the dihydroorotate dehydrogenase family. Type 2 subfamily. As to quaternary structure, monomer. The cofactor is FMN.

It is found in the cell membrane. It carries out the reaction (S)-dihydroorotate + a quinone = orotate + a quinol. The protein operates within pyrimidine metabolism; UMP biosynthesis via de novo pathway; orotate from (S)-dihydroorotate (quinone route): step 1/1. Functionally, catalyzes the conversion of dihydroorotate to orotate with quinone as electron acceptor. The chain is Dihydroorotate dehydrogenase (quinone) from Haemophilus influenzae (strain PittEE).